Reading from the N-terminus, the 164-residue chain is R-phycoerythrin alpha chain (164 aa).

Positions 47, 81, 82, 84, 88, 137, 139, and 142 each coordinate (2R,3E)-phycoerythrobilin.

Belongs to the phycobiliprotein family. In terms of assembly, heterododecamer of 6 alpha and 6 beta chains. The basic functional unit of phycobiliproteins is a ring-shaped hexamer formed from two back-to-back trimers contacting via the alpha chain subunits. The trimers are composed of alpha/beta subunit heterodimers arranged around a three-fold axis of symmetry. The phycoerythrins also contain a gamma subunit which is located in the center of the hexamer. Post-translationally, contains two covalently linked phycoerythrobilin chromophores.

Its subcellular location is the plastid. It localises to the chloroplast thylakoid membrane. Its function is as follows. Light-harvesting photosynthetic tetrapyrrole chromophore-protein from the phycobiliprotein complex. This chain is R-phycoerythrin alpha chain (cpeA), found in Griffithsia monilis (Red alga).